The sequence spans 430 residues: MPILEQVGAREILDSRGNPTVEVEVALTDGTFARAAVPSGASTGEHEAVELRDGDARYGGKGVTKAVNAVLDEIAPAIIGESADDQRLIDQALLDLDGTPDKSRLGANAILGVSLAVAKAAADSAGLALFRYLGGPNAHILPVPMMNILNGGAHADTGVDVQEFMVAPIGAPSFKESLRWGTEVYHSLKSVLKKQGLSTGLGDEGGFAPDVAGTRAALDLISTAIEATGLKLGADVALALDVAATEFYSAADGYSFEKEKRTAEQMGAFYAELLDAYPLVSIEDPLSEDDWDGWVALTTAIGDRVQLVGDDLFVTNPERLEEGIERGAANALLVKVNQIGTLTETLDAVTLAHSSGYKTMMSHRSGETEDTTIADLAVAVGSGQIKTGAPARSERVAKYNQLLRIEETLGDAARFAGDLAFPRFSIEPAN.

Glutamine 162 serves as a coordination point for (2R)-2-phosphoglycerate. Glutamate 204 (proton donor) is an active-site residue. The Mg(2+) site is built by aspartate 241, glutamate 283, and aspartate 310. Lysine 335, arginine 364, serine 365, and lysine 386 together coordinate (2R)-2-phosphoglycerate. Lysine 335 acts as the Proton acceptor in catalysis.

Belongs to the enolase family. Mg(2+) is required as a cofactor.

It is found in the cytoplasm. Its subcellular location is the secreted. It localises to the cell surface. The enzyme catalyses (2R)-2-phosphoglycerate = phosphoenolpyruvate + H2O. It participates in carbohydrate degradation; glycolysis; pyruvate from D-glyceraldehyde 3-phosphate: step 4/5. Its function is as follows. Catalyzes the reversible conversion of 2-phosphoglycerate (2-PG) into phosphoenolpyruvate (PEP). It is essential for the degradation of carbohydrates via glycolysis. In Mycobacteroides abscessus (strain ATCC 19977 / DSM 44196 / CCUG 20993 / CIP 104536 / JCM 13569 / NCTC 13031 / TMC 1543 / L948) (Mycobacterium abscessus), this protein is Enolase.